The sequence spans 1338 residues: MDTEDDPLLQDAWLDEEDEEVAFSSRKRREGALLCGKSSCRVRPLRVTLPVSGFWNIVGWIFTNPYCAGFILFLGCAIPAVLAVVMFLHYPALDIDISYNAFEIRNHESSQRFDALALALKSQFGSWGRNRRDLADFTSETLQRLIFEQLQQLHLNASHLQVSTRAKRSAPQGRTSSPEPRAHPHPGNETSRVTRGAPRWDYSNTYISANTQTHAHWRIELIFLARGDSENNIFTTERLVTIHEVERKIMDHPRFREFCWKPHEVLKDLPLGSYSYCSPPSSLMTYFFPTERGGKIYYDGMGQDLADIQGSLELAMTHPEFYWYVDEGLSAENKKSSLLRSEILFGAPLPNYYSVEDRWEEQRHKFQNFVVTYVAMLAKQSTSKVQVLYGGTDLFDYEVRRTFNNDMLLAFISSSCIAVLVYILTSCSVFLSFFGIASIGLSCLVALFLYHVVFGIQYLGILNGVAAFVIVGIGVDDVFVFINTYRQATHLKDLRLRMIHTIQTAGKATFFTSLTTAAAYAANIFSQIPAVHDFGLFMSLIVSCCWVAVLFTMPAALGIWTLYVSPLESSCQNSCSQKCTKKSTLHLAEDLFVASEGTSRAGRETLPYLDDDIPLLSVEEEPVSLEMGDVPLVSVMPENLQLPVEKSNRGHLIAHLQELLEHWVLWSAVKSRWVIVGLFLLVLLLSIFFASRLRPASRAPVLFRPDTNIQVLLDLKYNLSAEGISCITCSGLFQEKPHSLQNNFRTSLEKKKRGSASPWGSKGSISDTGQQDLQGTVYISKSRSKGRPAIYRFSLNASIPAPWQMVSPGDGEVPSFQVYRVPFGNFTRKLTACVSTVGLLKQTSPRKWMMTTLSCDSKRGWKFDFSFYVAAKEQQRTRKLYFAQSHKPPYHGRVCVAPPGCLLSSSPDGPTKGILYVPSEKAAPKARLSATSGFNPCMNMGCGKPAVRPLVDTGAMVFVVFGIRGVNRTKNSDNHVIGDMGSVIYDDSFDLFKEIGNLCRLCKAIASNTELVKPGGAQCLPSGYSISSFLQMLHPECKNIPEPNLLPGQLSHGAVGVKDGKVQWISMAFESTTYKGKSSFQTYADYLKWETFLQQQLQLFPEGSALRHGFQTCEHWKQIFMEIIGVQSALYGLILSLVICVAAVAVFTTHILLLLPVLLSILGVVCLVVTIMYWSGWEMGAVEAISLSILVGSSVDYCVHLVEGYLLAGENLPLHHAEDPTACRQWRTIEAIRHVGVAIVSSAVTTVIATVPLFFCIIAPFAKFGKIVALNTGVSILYTLTVSTALLSIMGPGTFTRSRTSCLKAVAGVLLAGLLGLCICLALLKGGFKIPLPNGTAL.

At 1–67 (MDTEDDPLLQ…VGWIFTNPYC (67 aa)) the chain is on the cytoplasmic side. The chain crosses the membrane as a helical span at residues 68–88 (AGFILFLGCAIPAVLAVVMFL). Residues 89–406 (HYPALDIDIS…YEVRRTFNND (318 aa)) are Lumenal-facing. The disordered stretch occupies residues 164 to 196 (TRAKRSAPQGRTSSPEPRAHPHPGNETSRVTRG). In terms of domain architecture, SSD spans 401–559 (RTFNNDMLLA…LFTMPAALGI (159 aa)). A helical transmembrane segment spans residues 407–427 (MLLAFISSSCIAVLVYILTSC). Serine 428 is a topological domain (cytoplasmic). Residues 429 to 449 (VFLSFFGIASIGLSCLVALFL) traverse the membrane as a helical segment. The Lumenal segment spans residues 450-452 (YHV). A helical transmembrane segment spans residues 453 to 473 (VFGIQYLGILNGVAAFVIVGI). Residues 474-517 (GVDDVFVFINTYRQATHLKDLRLRMIHTIQTAGKATFFTSLTTA) lie on the Cytoplasmic side of the membrane. The chain crosses the membrane as a helical span at residues 518–538 (AAYAANIFSQIPAVHDFGLFM). Serine 539 is a topological domain (lumenal). The helical transmembrane segment at 540-560 (LIVSCCWVAVLFTMPAALGIW) threads the bilayer. Over 561–672 (TLYVSPLESS…WVLWSAVKSR (112 aa)) the chain is Cytoplasmic. Residues 673-693 (WVIVGLFLLVLLLSIFFASRL) traverse the membrane as a helical segment. The Lumenal portion of the chain corresponds to 694–1128 (RPASRAPVLF…IFMEIIGVQS (435 aa)). The disordered stretch occupies residues 747–768 (SLEKKKRGSASPWGSKGSISDT). The chain crosses the membrane as a helical span at residues 1129 to 1149 (ALYGLILSLVICVAAVAVFTT). Residue histidine 1150 is a topological domain, cytoplasmic. The chain crosses the membrane as a helical span at residues 1151-1171 (ILLLLPVLLSILGVVCLVVTI). Residues 1172–1237 (MYWSGWEMGA…TIEAIRHVGV (66 aa)) are Lumenal-facing. Residues 1238–1258 (AIVSSAVTTVIATVPLFFCII) traverse the membrane as a helical segment. The Cytoplasmic portion of the chain corresponds to 1259–1266 (APFAKFGK). A helical transmembrane segment spans residues 1267–1287 (IVALNTGVSILYTLTVSTALL). Topologically, residues 1288–1302 (SIMGPGTFTRSRTSC) are lumenal. The helical transmembrane segment at 1303–1323 (LKAVAGVLLAGLLGLCICLAL) threads the bilayer. At 1324 to 1338 (LKGGFKIPLPNGTAL) the chain is on the cytoplasmic side.

It belongs to the patched family. In terms of tissue distribution, expressed in retina, hippocampus and cerebellum. Expressed in the ganglion and bipolar cells of the inner and outer nuclear layers of the retina and in Purkinje cells (at protein level). Expressed strongly in brain and retina, weakly in testis and bone marrow.

Its subcellular location is the endoplasmic reticulum membrane. It is found in the nucleus membrane. It localises to the cytoplasmic vesicle membrane. In terms of biological role, plays a role in neuronal proliferation and differentiation. Plays a role in the accumulation of cellular cholesterol. Involved in intracellular lipid droplet formation. May contribute to cholesterol homeostasis in neuronal cells. This chain is Protein dispatched homolog 3, found in Gallus gallus (Chicken).